A 165-amino-acid polypeptide reads, in one-letter code: Choriogonadotropin subunit beta (165 aa).

A signal peptide spans 1-20; the sequence is METLQGLLLWLLLSMGGAQA. Disulfide bonds link Cys-29-Cys-77, Cys-43-Cys-92, Cys-46-Cys-130, Cys-54-Cys-108, Cys-58-Cys-110, and Cys-113-Cys-120. N-linked (GlcNAc...) asparagine glycans are attached at residues Asn-33 and Asn-50. The segment at 131–165 is disordered; sequence DDPNLQASSSSKDPPPSPPSPSRLLEPAGTPFLPQ. 3 O-linked (GalNAc...) serine glycosylation sites follow: Ser-141, Ser-147, and Ser-152.

It belongs to the glycoprotein hormones subunit beta family. In terms of assembly, heterodimer of a common alpha chain and a unique beta chain which confers biological specificity to thyrotropin, lutropin, follitropin and gonadotropin. As to expression, placenta.

Its subcellular location is the secreted. In terms of biological role, stimulates the ovaries to synthesize the steroids that are essential for the maintenance of pregnancy. In Papio anubis (Olive baboon), this protein is Choriogonadotropin subunit beta (CGB).